We begin with the raw amino-acid sequence, 467 residues long: AT-rich interactive domain-containing protein cfi-1 (467 aa).

The tract at residues 1 to 56 is disordered; that stretch reads MSVRIDEPQLFVSMSKEPTQETVNVGGHHDDSSSNCDERVDDQTEEQKSPPASPDL. Positions 27-48 are enriched in basic and acidic residues; it reads GHHDDSSSNCDERVDDQTEEQK. Residues 181–273 form the ARID domain; sequence DVKRKEWLDD…YLYDYECEKE (93 aa). In terms of domain architecture, REKLES spans 356 to 464; that stretch reads AILEAHQRNL…GVLFALDETV (109 aa). Residues 383 to 441 form a disordered region; the sequence is LTACSNGNGGNIHNSGRESTSSNDSDIPAKRPKLENDVKTNGASSMRISTKHSDNSKTS. Positions 409–420 are enriched in basic and acidic residues; it reads IPAKRPKLENDV. Residues 421-430 are compositionally biased toward polar residues; the sequence is KTNGASSMRI.

Present in IL2 and URA neurons, and in AVD and PVC interneurons. Present in muscles from head and pharynx (at protein level).

The protein localises to the nucleus. Functionally, transcription factor. Regulates neuronal subtype identity. Involved in motor neuron fate determination and maintenance, acting as a transcriptional repressor to counteract gene activation by transcription factor unc-3 in a subset of motor neurons. Probably acts by binding to specific promoter elements. Promotes differentiation of URA sensory neurons and prevents them from expressing male-specific CEM neuronal features. Promotes differentiation of AVD and PVC interneurons and their glutamate receptor expression. The sequence is that of AT-rich interactive domain-containing protein cfi-1 (cfi-1) from Caenorhabditis elegans.